A 500-amino-acid chain; its full sequence is MASRLTLLTLLLLLLAGDRASSNPNATSSSSQDPESLQDRGEGKVATTVISKMLFVEPILEVSSLPTTNSTTNSATKITANTTDEPTTQPTTEPTTQPTIQPTQPTTQLPTDSPTQPTTGSFCPGPVTLCSDLESHSTEAVLGDALVDFSLKLYHAFSAMKKVETNMAFSPFSIASLLTQVLLGAGENTKTNLESILSYPKDFTCVHQALKGFTTKGVTSVSQIFHSPDLAIRDTFVNASRTLYSSSPRVLSNNSDANLELINTWVAKNTNNKISRLLDSLPSDTRLVLLNAIYLSAKWKTTFDPKKTRMEPFHFKNSVIKVPMMNSKKYPVAHFIDQTLKAKVGQLQLSHNLSLVILVPQNLKHRLEDMEQALSPSVFKAIMEKLEMSKFQPTLLTLPRIKVTTSQDMLSIMEKLEFFDFSYDLNLCGLTEDPDLQVSAMQHQTVLELTETGVEAAAASAISVARTLLVFEVQQPFLFVLWDQQHKFPVFMGRVYDPRA.

A signal peptide spans 1-22 (MASRLTLLTLLLLLLAGDRASS). Residues 20–31 (ASSNPNATSSSS) show a composition bias toward low complexity. The disordered stretch occupies residues 20–43 (ASSNPNATSSSSQDPESLQDRGEG). N-linked (GlcNAc...) (complex) asparagine glycosylation is present at asparagine 25. 2 O-linked (GalNAc...) threonine glycosylation sites follow: threonine 47 and threonine 48. A glycan (O-linked (GalNAc...) serine) is linked at serine 64. Residues 65–118 (LPTTNSTTNSATKITANTTDEPTTQPTTEPTTQPTIQPTQPTTQLPTDSPTQPT) form a disordered region. Residues 67-118 (TTNSTTNSATKITANTTDEPTTQPTTEPTTQPTIQPTQPTTQLPTDSPTQPT) show a composition bias toward low complexity. N-linked (GlcNAc...) asparagine glycosylation is present at asparagine 69. A glycan (O-linked (GalNAc...) threonine) is linked at threonine 71. N-linked (GlcNAc...) asparagine glycosylation is present at asparagine 81. 4 O-linked (GalNAc...) threonine glycosylation sites follow: threonine 83, threonine 88, threonine 92, and threonine 96. 7 consecutive repeat copies span residues 85-88 (EPTT), 89-92 (QPTT), 93-96 (EPTT), 97-100 (QPTI), 101-104 (QPTQ), 105-108 (PTTQ), and 116-119 (QPTT). Residues 85 to 119 (EPTTQPTTEPTTQPTIQPTQPTTQLPTDSPTQPTT) are 7 X 4 AA tandem repeats of [QE]-P-T-[TQ]. 2 disulfides stabilise this stretch: cysteine 123/cysteine 428 and cysteine 130/cysteine 205. 2 N-linked (GlcNAc...) (complex) asparagine glycosylation sites follow: asparagine 238 and asparagine 253. Asparagine 272 carries N-linked (GlcNAc...) asparagine; in variant TA glycosylation. Residue asparagine 352 is glycosylated (N-linked (GlcNAc...) (complex) asparagine).

This sequence belongs to the serpin family. As to quaternary structure, interacts with MASP1. In terms of assembly, (Microbial infection) Binds to E.coli stcE which allows localization of SERPING1 to cell membranes thus protecting the bacteria against complement-mediated lysis. Highly glycosylated (49%) with N- and O-glycosylation. O-glycosylated with core 1 or possibly core 8 glycans. N-glycan heterogeneity at Asn-25: Hex5HexNAc4 (minor), dHex1Hex5HexNAc4 (minor), Hex6HexNAc5 (major) and dHex1Hex6HexNAc5 (minor). Post-translationally, cleaved by C1S in vitro. In terms of processing, (Microbial infection) Can be proteolytically cleaved by E.coli stcE.

Its subcellular location is the secreted. Its function is as follows. Serine protease inhibitor, which acrs as a regulator of the classical complement pathway. Forms a proteolytically inactive stoichiometric complex with the C1r or C1s proteases. May also regulate blood coagulation, fibrinolysis and the generation of kinins. Very efficient inhibitor of FXIIa. Inhibits chymotrypsin and kallikrein. The chain is Plasma protease C1 inhibitor (SERPING1) from Homo sapiens (Human).